A 250-amino-acid polypeptide reads, in one-letter code: ATP synthase subunit a (250 aa).

The next 6 helical transmembrane spans lie at 29–49 (ASLF…FATS), 84–104 (FFPM…LGMM), 114–134 (IVVT…YGFY), 143–163 (LFVP…IEVI), 189–209 (VFAG…GGAL), and 216–236 (VALT…FAVL).

The protein belongs to the ATPase A chain family. In terms of assembly, F-type ATPases have 2 components, CF(1) - the catalytic core - and CF(0) - the membrane proton channel. CF(1) has five subunits: alpha(3), beta(3), gamma(1), delta(1), epsilon(1). CF(0) has three main subunits: a(1), b(2) and c(9-12). The alpha and beta chains form an alternating ring which encloses part of the gamma chain. CF(1) is attached to CF(0) by a central stalk formed by the gamma and epsilon chains, while a peripheral stalk is formed by the delta and b chains.

The protein localises to the cell inner membrane. In terms of biological role, key component of the proton channel; it plays a direct role in the translocation of protons across the membrane. The sequence is that of ATP synthase subunit a from Allorhizobium ampelinum (strain ATCC BAA-846 / DSM 112012 / S4) (Agrobacterium vitis (strain S4)).